A 1031-amino-acid chain; its full sequence is MMS19 nucleotide excision repair protein homolog (1031 aa).

N-acetylalanine is present on alanine 2. 4 HEAT repeats span residues 867–905, 909–947, 950–988, and 991–1029; these read QRFF…RLPK, LPEL…EAPQ, SLHV…LPTS, and LPYK…LGSP. Serine 1028 is modified (phosphoserine).

The protein belongs to the MET18/MMS19 family. Component of the CIA complex. In the CIA complex, interacts directly with CIAO2B and CIAO3. Component of the MMXD complex, composed of CIAO1, ERCC2, CIAO2B, MMS19 and SLC25A5. Interacts with CIAO2B; the interaction is direct. Interacts with ERCC2/XPD; the interaction is direct. Interacts with ERCC3/XPB and NCOA3/RAC3. Interacts with RTEL1; the interaction mediates the association of RTEL1 with the CIA complex. Interacts with BRIP1. Interacts with KIF4A; the interaction facilitates the transfer of Fe-S clusters to KIF4A to ensure proper localization of KIF4A to the mitotic machinery components. Interacts with CCDC117; the interaction is indirect. Ubiquitinated; undergoes 'Lys-48'-linked polyubiquitination. In terms of tissue distribution, ubiquitously expressed with higher expression in testis.

The protein localises to the nucleus. It is found in the cytoplasm. Its subcellular location is the cytoskeleton. The protein resides in the spindle. Key component of the cytosolic iron-sulfur protein assembly (CIA) complex, a multiprotein complex that mediates the incorporation of iron-sulfur cluster into apoproteins specifically involved in DNA metabolism and genomic integrity. In the CIA complex, MMS19 acts as an adapter between early-acting CIA components and a subset of cellular target Fe/S proteins such as ERCC2/XPD, FANCJ and RTEL1, thereby playing a key role in nucleotide excision repair (NER), homologous recombination-mediated double-strand break DNA repair, DNA replication and RNA polymerase II (POL II) transcription. As a CIA complex component and in collaboration with CIAO1 and CIAO2, binds to and facilitates the assembly of most cytosolic-nuclear Fe/S proteins. As part of the mitotic spindle-associated MMXD complex, plays a role in chromosome segregation, probably by facilitating iron-sulfur cluster assembly into ERCC2/XPD. Together with CIAO2, facilitates the transfer of Fe-S clusters to the motor protein KIF4A, which ensures proper localization of KIF4A to mitotic machinery components to promote the progression of mitosis. Indirectly acts as a transcriptional coactivator of estrogen receptor (ER), via its role in iron-sulfur insertion into some component of the TFIIH-machinery. This is MMS19 nucleotide excision repair protein homolog from Mus musculus (Mouse).